Consider the following 586-residue polypeptide: NudC domain-containing protein 1 (586 aa).

The segment at 259-278 (KDQPESSEDEKMDEDNKREP) is disordered. Residues 275 to 364 (KREPLYNWHQ…EPGSTWAELV (90 aa)) enclose the CS domain.

Its subcellular location is the cytoplasm. The protein localises to the nucleus. This Xenopus tropicalis (Western clawed frog) protein is NudC domain-containing protein 1.